We begin with the raw amino-acid sequence, 75 residues long: Large ribosomal subunit protein bL31 (75 aa).

Zn(2+) contacts are provided by C16, C18, C37, and C40.

It belongs to the bacterial ribosomal protein bL31 family. Type A subfamily. As to quaternary structure, part of the 50S ribosomal subunit. Zn(2+) is required as a cofactor.

In terms of biological role, binds the 23S rRNA. The chain is Large ribosomal subunit protein bL31 from Nitrosospira multiformis (strain ATCC 25196 / NCIMB 11849 / C 71).